Consider the following 129-residue polypeptide: Keratin-associated protein 5-6 (129 aa).

Repeat copies occupy residues 28-31 (CCVP), 34-37 (CCKP), 40-43 (CCVP), 90-93 (CCKP), 109-112 (CCKP), and 119-122 (CCVP). The segment at 28–112 (CCVPICCCKP…SCCQSSCCKP (85 aa)) is 6 X 4 AA repeats of C-C-X-P.

The protein belongs to the KRTAP type 5 family. As to quaternary structure, interacts with hair keratins. In terms of tissue distribution, expressed in hair root and not in skin. Expressed also in liver and skeletal muscle.

Functionally, in the hair cortex, hair keratin intermediate filaments are embedded in an interfilamentous matrix, consisting of hair keratin-associated protein (KRTAP), which are essential for the formation of a rigid and resistant hair shaft through their extensive disulfide bond cross-linking with abundant cysteine residues of hair keratins. The matrix proteins include the high-sulfur and high-glycine-tyrosine keratins. This Homo sapiens (Human) protein is Keratin-associated protein 5-6 (KRTAP5-6).